The chain runs to 351 residues: Ferredoxin--NADP reductase (351 aa).

Aspartate 44, glutamine 52, tyrosine 57, valine 97, phenylalanine 132, aspartate 296, and serine 337 together coordinate FAD.

The protein belongs to the ferredoxin--NADP reductase type 2 family. As to quaternary structure, homodimer. FAD is required as a cofactor.

The enzyme catalyses 2 reduced [2Fe-2S]-[ferredoxin] + NADP(+) + H(+) = 2 oxidized [2Fe-2S]-[ferredoxin] + NADPH. This chain is Ferredoxin--NADP reductase, found in Paraburkholderia phymatum (strain DSM 17167 / CIP 108236 / LMG 21445 / STM815) (Burkholderia phymatum).